We begin with the raw amino-acid sequence, 2564 residues long: Highly reducing polyketide synthase 40 (2564 aa).

The Ketosynthase family 3 (KS3) domain occupies 8–432; it reads PEPIAIIGMS…GTNAHVIVDR (425 aa). Catalysis depends on for beta-ketoacyl synthase activity residues Cys-181, His-317, and His-358. The tract at residues 435–482 is disordered; the sequence is EHNHSNGTNGTNGTHHHNGTNGSNGNGTNGTNGTNGTDGFHDTESISD. Residues 439 to 455 are compositionally biased toward low complexity; it reads SNGTNGTNGTHHHNGTN. Over residues 473 to 482 the composition is skewed to basic and acidic residues; it reads GFHDTESISD. The segment at 580–914 is malonyl-CoA:ACP transacylase (MAT) domain; that stretch reads YVFGGQGAQY…SAAENMLRTL (335 aa). The N-terminal hotdog fold stretch occupies residues 973–1113; it reads HELLGNLSAD…GRIRAVVDQG (141 aa). Positions 973–1280 are dehydratase (DH) domain; sequence HELLGNLSAD…GLRTAQLPSD (308 aa). In terms of domain architecture, PKS/mFAS DH spans 973 to 1283; sequence HELLGNLSAD…TAQLPSDVVN (311 aa). The active-site Proton acceptor; for dehydratase activity is His-1005. The segment at 1130–1283 is C-terminal hotdog fold; sequence AASVPHHITS…TAQLPSDVVN (154 aa). Catalysis depends on Asp-1199, which acts as the Proton donor; for dehydratase activity. Residues 1451-1556 are methyltransferase (CMet) domain; that stretch reads LEVGGGTASA…RQLLRPGGTL (106 aa). Residues 1854–2167 form an enoyl reductase (ER) domain region; it reads GLLETFRWVD…AGKHMGKVIL (314 aa). Residues 2191 to 2370 are ketoreductase (KR) domain; the sequence is ATYLLVGGFG…SFAIDVGVVS (180 aa). The region spanning 2472 to 2549 is the Carrier domain; the sequence is EALDAVGQAV…ELIHLVAGKS (78 aa). O-(pantetheine 4'-phosphoryl)serine is present on Ser-2509.

Its pathway is secondary metabolite biosynthesis. Its function is as follows. Highly reducing polyketide synthase; part of the gene cluster that mediates the biosynthesis of the lipopeptides W493 A and B. W493 A and B consist of six amino acid residues D-allo-thr, L-Ala, D-Ala, L-Gln, D-Tyr, and L-Val/L-Ile linked to a 3-hydroxy-4-methyltetradecanoic acid polyketide chain. The biosynthesis starts with formation of the linear polyketide chain by the highly reducing polyketide synthase PKS40. The gene cluster contains a putative acyl-CoA ligase (FPSE_09184) for formation of a CoA thioester polyketide. The thiol bond could be hydrolyzed by the putative thioesterase (FPSE_09186) and then accepted by the first T domain in module 1 of NRPS32. The second T domain is responsible for accepting a threonine, which is adenylated by the A domain and epimerized to the D-allo-threonine formed by the E domain. The five successive modules incorporate Ala, Ala, Gln, Tyr, and Val/Ile into the final product, which is released by cyclization. This is Highly reducing polyketide synthase 40 from Fusarium pseudograminearum (strain CS3096) (Wheat and barley crown-rot fungus).